The following is a 549-amino-acid chain: Maturase K (549 aa).

The protein belongs to the intron maturase 2 family. MatK subfamily.

It localises to the plastid. Its subcellular location is the chloroplast. Functionally, usually encoded in the trnK tRNA gene intron. Probably assists in splicing its own and other chloroplast group II introns. The chain is Maturase K from Albidella oligococca (Caldesia oligococca).